A 933-amino-acid polypeptide reads, in one-letter code: Envelope glycoprotein B (933 aa).

An N-terminal signal peptide occupies residues 1–36 (MPRPRPRALRGSSPGWALVAAVAVGAALLMATLAVA). Positions 36 to 49 (AAPPGPRGPAARSP) are enriched in low complexity. The tract at residues 36 to 115 (AAPPGPRGPA…GNGTRSAARR (80 aa)) is disordered. The Virion surface portion of the chain corresponds to 37–797 (APPGPRGPAA…SGVSSFLSNP (761 aa)). The span at 54-69 (ASVEPVEDGDYDEYDD) shows a compositional bias: acidic residues. Residues Asn107 and Asn161 are each glycosylated (N-linked (GlcNAc...) asparagine; by host). 5 disulfides stabilise this stretch: Cys136/Cys596, Cys153/Cys552, Cys227/Cys291, Cys384/Cys432, and Cys619/Cys656. Involved in fusion and/or binding to host membrane stretches follow at residues 193–199 (TWQGSRY) and 278–285 (AHAGFYKT). Residues Asn418 and Asn450 are each glycosylated (N-linked (GlcNAc...) asparagine; by host). Asn697 and Asn747 each carry an N-linked (GlcNAc...) asparagine; by host glycan. Hydrophobic membrane proximal region regions lie at residues 742–795 (IDRI…SFLS) and 754–795 (LMAG…SFLS). Residues 798–818 (FGALAVGLLVLAGLVAAFFAM) traverse the membrane as a helical segment. Topologically, residues 819–933 (RYIMRLRANP…SKDDEDGADP (115 aa)) are intravirion. Residues 881-884 (YMTL) carry the Golgi targeting motif. Positions 920–923 (YQPL) match the Internalization motif motif.

This sequence belongs to the herpesviridae glycoprotein B family. In terms of assembly, homotrimer; disulfide-linked. Binds to heparan sulfate proteoglycans. Interacts with gH/gL heterodimer.

The protein localises to the virion membrane. It is found in the host cell membrane. Its subcellular location is the host endosome membrane. The protein resides in the host Golgi apparatus membrane. Envelope glycoprotein that forms spikes at the surface of virion envelope. Essential for the initial attachment to heparan sulfate moieties of the host cell surface proteoglycans. Involved in fusion of viral and cellular membranes leading to virus entry into the host cell. Following initial binding to its host receptors, membrane fusion is mediated by the fusion machinery composed at least of gB and the heterodimer gH/gL. May be involved in the fusion between the virion envelope and the outer nuclear membrane during virion egress. This chain is Envelope glycoprotein B, found in Herpesvirus ateles type 1 (strain Lennette).